The sequence spans 220 residues: Dual specificity phosphatase 29 (220 aa).

Positions H54–Q202 constitute a Tyrosine-protein phosphatase domain. H146 to R153 contacts substrate. The active-site Phosphocysteine intermediate is the C147.

This sequence belongs to the protein-tyrosine phosphatase family. Non-receptor class dual specificity subfamily. In terms of assembly, homodimer. Interacts with PRKAA2.

The protein resides in the cytoplasm. Its subcellular location is the nucleus. It carries out the reaction O-phospho-L-tyrosyl-[protein] + H2O = L-tyrosyl-[protein] + phosphate. The enzyme catalyses O-phospho-L-seryl-[protein] + H2O = L-seryl-[protein] + phosphate. The catalysed reaction is O-phospho-L-threonyl-[protein] + H2O = L-threonyl-[protein] + phosphate. Dual specificity phosphatase able to dephosphorylate phosphotyrosine, phosphoserine and phosphothreonine residues within the same substrate, with a preference for phosphotyrosine as a substrate. Involved in the modulation of intracellular signaling cascades. In skeletal muscle regulates systemic glucose homeostasis by activating, AMPK, an energy sensor protein kinase. Affects MAP kinase signaling though modulation of the ERK1/2 cascade in skeletal muscle promoting muscle cell differentiation, development and atrophy. In Pan troglodytes (Chimpanzee), this protein is Dual specificity phosphatase 29 (DUSP29).